A 464-amino-acid chain; its full sequence is F-box/WD repeat-containing protein 12 (464 aa).

The 45-residue stretch at 1–45 (MEIRLPDLALKRIFSFLDLFGLLQVSQVNKHWNRIADSDYLWRSL) folds into the F-box domain. WD repeat units follow at residues 89-132 (YKVT…CAWD), 136-174 (GTMI…KVWN), 178-217 (RDAL…YTFT), 222-263 (RDVS…FLTE), 270-315 (EGSV…ITFD), 320-367 (KTGG…LLFS), 370-407 (GFLL…YMWE), and 416-461 (RSCC…VMYS).

In terms of assembly, interacts with SKP1. Interacts with CUL1. Interacts with IL22RA1. Ubiquitously expressed.

The protein operates within protein modification; protein ubiquitination. Its function is as follows. Substrate-recognition component of the SCF (SKP1-CUL1-F-box protein)-type E3 ubiquitin ligase complex. Promotes degradation of interleukin-22 receptor subunit IL22RA1 in resting and IL22-stimulated conditions by facilitating its ubiquitination. Functions as a cell growth suppressor. This is F-box/WD repeat-containing protein 12 (FBXW12) from Homo sapiens (Human).